The chain runs to 122 residues: Large ribosomal subunit protein uL14 (122 aa).

The protein belongs to the universal ribosomal protein uL14 family. Part of the 50S ribosomal subunit. Forms a cluster with proteins L3 and L19. In the 70S ribosome, L14 and L19 interact and together make contacts with the 16S rRNA in bridges B5 and B8.

In terms of biological role, binds to 23S rRNA. Forms part of two intersubunit bridges in the 70S ribosome. This Sulfurimonas denitrificans (strain ATCC 33889 / DSM 1251) (Thiomicrospira denitrificans (strain ATCC 33889 / DSM 1251)) protein is Large ribosomal subunit protein uL14.